The following is a 245-amino-acid chain: Eukaryotic translation initiation factor 6 (245 aa).

The protein belongs to the eIF-6 family. As to quaternary structure, monomer. Associates with the 60S ribosomal subunit.

The protein localises to the cytoplasm. It localises to the nucleus. It is found in the nucleolus. Its function is as follows. Binds to the 60S ribosomal subunit and prevents its association with the 40S ribosomal subunit to form the 80S initiation complex in the cytoplasm. May also be involved in ribosome biogenesis. The polypeptide is Eukaryotic translation initiation factor 6 (eif6) (Xenopus laevis (African clawed frog)).